The chain runs to 196 residues: MPFVVVITGIPGVGKSTITRLALQRTRAKFRVVNFGDIMFQEAVKAGWVSHRDEVRKLSLKVQRELQLKAAQRILEISQKEPVLLDTHATIKTPLGYMLGFPREVIEVINPRFMVIIEANPSEILGRRLRDLKRDRDVETEDQIQRHQDLNRAATISYAMHSNALIKIIENHEDKGLEEAVNELVKILDLAVNEDA.

Glycine 9 to threonine 17 is an ATP binding site.

Belongs to the archaeal adenylate kinase family.

Its subcellular location is the cytoplasm. The enzyme catalyses AMP + ATP = 2 ADP. The protein is Adenylate kinase of Thermococcus sibiricus (strain DSM 12597 / MM 739).